Consider the following 145-residue polypeptide: UPF0260 protein VV2402 (145 aa).

Belongs to the UPF0260 family.

The polypeptide is UPF0260 protein VV2402 (Vibrio vulnificus (strain YJ016)).